A 63-amino-acid chain; its full sequence is H/ACA ribonucleoprotein complex subunit 3-like protein (63 aa).

Residues 18-40 (KMDPEGKPTLSAHPARFSPDDKY) form a disordered region.

Belongs to the NOP10 family. Component of the small nucleolar ribonucleoprotein particles containing H/ACA-type snoRNAs (H/ACA snoRNPs).

It localises to the nucleus. The protein resides in the nucleolus. Required for ribosome biogenesis. Part of a complex which catalyzes pseudouridylation of rRNA. This involves the isomerization of uridine such that the ribose is subsequently attached to C5, instead of the normal N1. Pseudouridine ('psi') residues may serve to stabilize the conformation of rRNAs. This Trypanosoma cruzi protein is H/ACA ribonucleoprotein complex subunit 3-like protein.